A 432-amino-acid polypeptide reads, in one-letter code: Trigger factor (432 aa).

The PPIase FKBP-type domain maps to 161–246 (EDRVTIDFTG…LKKVEERGLP (86 aa)).

Belongs to the FKBP-type PPIase family. Tig subfamily.

It localises to the cytoplasm. It carries out the reaction [protein]-peptidylproline (omega=180) = [protein]-peptidylproline (omega=0). Functionally, involved in protein export. Acts as a chaperone by maintaining the newly synthesized protein in an open conformation. Functions as a peptidyl-prolyl cis-trans isomerase. The sequence is that of Trigger factor from Salmonella choleraesuis (strain SC-B67).